The following is a 110-amino-acid chain: Phosphoribosyl-AMP cyclohydrolase (110 aa).

Asp-80 provides a ligand contact to Mg(2+). Zn(2+) is bound at residue Cys-81. Mg(2+) contacts are provided by Asp-82 and Asp-84. Residues Cys-97 and Cys-104 each coordinate Zn(2+).

It belongs to the PRA-CH family. Homodimer. It depends on Mg(2+) as a cofactor. Zn(2+) serves as cofactor.

It localises to the cytoplasm. It carries out the reaction 1-(5-phospho-beta-D-ribosyl)-5'-AMP + H2O = 1-(5-phospho-beta-D-ribosyl)-5-[(5-phospho-beta-D-ribosylamino)methylideneamino]imidazole-4-carboxamide. It functions in the pathway amino-acid biosynthesis; L-histidine biosynthesis; L-histidine from 5-phospho-alpha-D-ribose 1-diphosphate: step 3/9. Its function is as follows. Catalyzes the hydrolysis of the adenine ring of phosphoribosyl-AMP. This is Phosphoribosyl-AMP cyclohydrolase from Clostridium botulinum (strain Kyoto / Type A2).